The following is a 205-amino-acid chain: Auxin-responsive protein IAA8 (205 aa).

A disordered region spans residues 1–48; it reads MECMASTEESLPASSSMDSCSGELPTTTTTAPAQSTASSGCRPPATAA. Residues 7 to 19 show a composition bias toward polar residues; the sequence is TEESLPASSSMDS. A compositionally biased stretch (low complexity) spans 25–39; it reads PTTTTTAPAQSTASS. The short motif at 58–62 is the EAR-like (transcriptional repression) element; the sequence is LRLGL. Residues 71-98 are disordered; the sequence is DGNNPSTPRSSLTTATVTADRGGGGGGH. Polar residues predominate over residues 73 to 87; it reads NNPSTPRSSLTTATV. The 97-residue stretch at 103-199 folds into the PB1 domain; the sequence is SLFVKVYMEG…KRLRIARADD (97 aa).

Belongs to the Aux/IAA family. In terms of assembly, homodimers and heterodimers. As to expression, highly expressed in green shoots. Expressed in flowers.

Its subcellular location is the nucleus. Functionally, aux/IAA proteins are short-lived transcriptional factors that function as repressors of early auxin response genes at low auxin concentrations. This chain is Auxin-responsive protein IAA8 (IAA8), found in Oryza sativa subsp. japonica (Rice).